A 608-amino-acid polypeptide reads, in one-letter code: Albumin (608 aa).

An N-terminal signal peptide occupies residues 1-18 (MKWVTFISLFFLFSSAYS). Positions 19-24 (RGLVRR) are excised as a propeptide. Albumin domains lie at 19 to 210 (RGLV…EALR), 211 to 403 (EKVL…EFKP), and 404 to 601 (LVDE…KLVA). Ser-29 is modified (phosphoserine). Residues Glu-30 and Asp-37 each coordinate Ca(2+). The cysteines at positions 77 and 86 are disulfide-linked. Ser-82 and Ser-89 each carry phosphoserine. Residue His-91 coordinates Zn(2+). Disulfide bonds link Cys-99–Cys-115, Cys-114–Cys-125, Cys-148–Cys-193, Cys-192–Cys-201, Cys-224–Cys-270, and Cys-269–Cys-277. An N6-succinyllysine modification is found at Lys-229. Residue Glu-268 coordinates Ca(2+). 2 residues coordinate Zn(2+): His-271 and Asp-273. Ca(2+) contacts are provided by Asp-273, Glu-276, Asp-279, and Asp-283. 8 cysteine pairs are disulfide-bonded: Cys-289–Cys-303, Cys-302–Cys-313, Cys-340–Cys-385, Cys-384–Cys-393, Cys-416–Cys-462, Cys-461–Cys-472, Cys-485–Cys-501, and Cys-500–Cys-511. Ser-443 is modified (phosphoserine). Thr-444 and Thr-446 each carry phosphothreonine. Lys-460 carries the N6-succinyllysine modification. At Ser-513 the chain carries Phosphoserine. Disulfide bonds link Cys-538–Cys-583 and Cys-582–Cys-591. An N6-methyllysine modification is found at Lys-558. Phosphothreonine is present on Thr-570. Lys-588 is subject to N6-succinyllysine.

The protein belongs to the ALB/AFP/VDB family. In terms of assembly, interacts with FCGRT; this interaction regulates ALB homeostasis. Interacts with TASOR. In plasma, occurs in a covalently-linked complex with chromophore-bound alpha-1-microglobulin; this interaction does not prevent fatty acid binding to ALB. Phosphorylated by FAM20C in the extracellular medium. Plasma.

The protein localises to the secreted. Functionally, binds water, Ca(2+), Na(+), K(+), fatty acids, hormones, bilirubin and drugs. Its main function is the regulation of the colloidal osmotic pressure of blood. Major zinc transporter in plasma, typically binds about 80% of all plasma zinc. Major calcium and magnesium transporter in plasma, binds approximately 45% of circulating calcium and magnesium in plasma. Potentially has more than two calcium-binding sites and might additionally bind calcium in a non-specific manner. The shared binding site between zinc and calcium at residue Asp-273 suggests a crosstalk between zinc and calcium transport in the blood. The rank order of affinity is zinc &gt; calcium &gt; magnesium. Binds to the bacterial siderophore enterobactin and inhibits enterobactin-mediated iron uptake of E.coli from ferric transferrin, and may thereby limit the utilization of iron and growth of enteric bacteria such as E.coli. Does not prevent iron uptake by the bacterial siderophore aerobactin. The protein is Albumin (ALB) of Canis lupus familiaris (Dog).